The following is a 74-amino-acid chain: MTNVYSFDGILVFGLLFICTCAYLKKVPRLNSWLLSEKKGVWGVFYKAAVIGTRLHVVVAASCLCMAFYLIFLK.

A signal peptide spans 1–22 (MTNVYSFDGILVFGLLFICTCA). The Extracellular segment spans residues 23–52 (YLKKVPRLNSWLLSEKKGVWGVFYKAAVIG). A helical membrane pass occupies residues 53 to 73 (TRLHVVVAASCLCMAFYLIFL). Lys-74 is a topological domain (cytoplasmic).

It belongs to the KISH family.

It localises to the golgi apparatus membrane. Involved in the early part of the secretory pathway. This chain is Protein kish-B (tmem167b), found in Danio rerio (Zebrafish).